We begin with the raw amino-acid sequence, 501 residues long: Uridine kinase (501 aa).

The residue at position 17 (S17) is a Phosphoserine. Position 63–70 (63–70) interacts with ATP; that stretch reads GASGSGKT. At S276 the chain carries Phosphoserine.

The protein belongs to the uridine kinase family.

It localises to the cytoplasm. It is found in the nucleus. It catalyses the reaction uridine + ATP = UMP + ADP + H(+). The catalysed reaction is cytidine + ATP = CMP + ADP + H(+). The protein operates within pyrimidine metabolism; CTP biosynthesis via salvage pathway; CTP from cytidine: step 1/3. Its pathway is pyrimidine metabolism; UMP biosynthesis via salvage pathway; UMP from uridine: step 1/1. In terms of biological role, catalyzes the conversion of uridine into UMP and cytidine into CMP in the pyrimidine salvage pathway. This Saccharomyces cerevisiae (strain ATCC 204508 / S288c) (Baker's yeast) protein is Uridine kinase (URK1).